The following is a 130-amino-acid chain: Leptin receptor gene-related protein (130 aa).

The next 4 membrane-spanning stretches (helical) occupy residues 7 to 27, 32 to 52, 68 to 88, and 99 to 119; these read LVALSFSGALGLTFLLLGCAL, QYWPMFVLIFYILSPIPNLIA, LAYFLTTGIVVSAYGLPVVLA, and GLVMAGNCVIFLTILGFFLIF.

It belongs to the OB-RGRP/VPS55 family.

The protein localises to the golgi apparatus membrane. Its subcellular location is the endosome membrane. Its function is as follows. Involved in protein trafficking. May be involved in the down-regulation of membrane protein levels. This Danio rerio (Zebrafish) protein is Leptin receptor gene-related protein (leprot).